The sequence spans 101 residues: Vacuolar ATPase assembly integral membrane protein VMA21 (101 aa).

Over 1-25 the chain is Cytoplasmic; sequence MERLDKAALNALQPSDFRNESSLAS. The chain crosses the membrane as a helical span at residues 26 to 46; that stretch reads TLKTLLFFTALMITVPIGLYF. Residues 47–65 are Lumenal-facing; the sequence is TTKSYVFEGAFGMSNRDSY. Residues 66–86 form a helical membrane-spanning segment; sequence FYAAIVAVVAVHVVLALFVYV. The Cytoplasmic portion of the chain corresponds to 87 to 101; the sequence is AWNEGSRQWREGKQD.

This sequence belongs to the VMA21 family. As to quaternary structure, associates with the V0 complex of the vacuolar ATPase (V-ATPase). Interacts with ATP6AP2.

Its subcellular location is the endoplasmic reticulum membrane. The protein resides in the endoplasmic reticulum-Golgi intermediate compartment membrane. It is found in the cytoplasmic vesicle. The protein localises to the COPII-coated vesicle membrane. Its function is as follows. Required for the assembly of the V0 complex of the vacuolar ATPase (V-ATPase) in the endoplasmic reticulum. This Bos taurus (Bovine) protein is Vacuolar ATPase assembly integral membrane protein VMA21.